The sequence spans 139 residues: uncharacterized protein (139 aa).

Helical transmembrane passes span Leu-71–Leu-91 and Glu-97–Val-117.

Belongs to the RseC family.

It localises to the cell inner membrane. This is an uncharacterized protein from Haemophilus influenzae (strain ATCC 51907 / DSM 11121 / KW20 / Rd).